Reading from the N-terminus, the 1769-residue chain is Tight junction protein 1 (1769 aa).

A PDZ 1 domain is found at 23 to 110; that stretch reads TVTLHRAPGF…NAKITIRRKK (88 aa). Over residues 102 to 112 the composition is skewed to basic residues; it reads AKITIRRKKKV. The disordered stretch occupies residues 102–188; that stretch reads AKITIRRKKK…QPPKPTKVTL (87 aa). Positions 123-135 are enriched in acidic residues; it reads PVSENEDSYDEEV. A Phosphoserine modification is found at S125. Y131 bears the Phosphotyrosine mark. Residues 148-174 show a composition bias toward basic and acidic residues; that stretch reads RRSEKSWARDRSASRERSLSPRSDRRS. 3 positions are modified to phosphoserine: S174, S177, and S178. T184 carries the phosphothreonine modification. The PDZ 2 domain maps to 185–263; that stretch reads KVTLVKSRKN…KLKMVVQRDE (79 aa). Residues S211 and S240 each carry the phosphoserine modification. T266 bears the Phosphothreonine mark. S274, S276, S279, S283, S289, S293, S296, S299, S322, S328, S333, S336, and S352 each carry phosphoserine. Residues 295 to 362 form a disordered region; it reads ASDHSGRSHD…TPVKHADDHT (68 aa). A compositionally biased stretch (basic and acidic residues) spans 298-326; the sequence is HSGRSHDRPPRHSRSRSPDQRSEPSDHSR. T353 carries the post-translational modification Phosphothreonine. The PDZ 3 domain maps to 420–501; that stretch reads SMKLVKFRKG…GEEVTILAQK (82 aa). One can recognise an SH3 domain in the interval 515 to 583; the sequence is GDSFYIRTHF…PNKNRAEQLA (69 aa). In terms of domain architecture, Guanylate kinase-like spans 609–790; that stretch reads SKRNLRKSRE…WYGALKEAIQ (182 aa). Phosphoserine is present on residues S616 and S621. Residues 632 to 875 are occludin (OCLN)-binding region; the sequence is YERVVLREAG…GTPPESAITR (244 aa). The residue at position 808 (T808) is a Phosphothreonine. Residues S809 and S820 each carry the phosphoserine modification. A Phosphotyrosine modification is found at Y821. Residues S823, S827, and S836 each carry the phosphoserine modification. 2 disordered regions span residues 824–976 and 1010–1067; these read APGS…LRTP and EMMR…SYTD. Residues T845, T847, T853, T860, and T867 each carry the phosphothreonine modification. Basic and acidic residues predominate over residues 878–891; that stretch reads EPVREDSSGMHHEN. The segment covering 892 to 905 has biased composition (low complexity); the sequence is QTYPPYSPQAQPQP. S911 carries the post-translational modification Phosphoserine. Polar residues-rich tracts occupy residues 933 to 952 and 962 to 976; these read PETN…TLTN and PSTS…LRTP. S967 carries the phosphoserine modification. S1070 bears the Phosphoserine mark. Disordered stretches follow at residues 1091-1212, 1224-1261, and 1273-1589; these read SYYD…KAGH, PLIP…MKPQ, and KRSA…EFDS. A compositionally biased stretch (basic and acidic residues) spans 1108–1124; that stretch reads QHPRDLDSRQHPEESSE. At S1138 the chain carries Phosphoserine. Phosphotyrosine is present on residues Y1139 and Y1164. Residues 1150 to 1370 are actin-binding region (ABR); the sequence is RTSTLRHEEQ…FDRRSFENKP (221 aa). The span at 1273–1286 shows a compositional bias: basic and acidic residues; it reads KRSASLENKKDENH. Residues 1300 to 1310 show a composition bias toward pro residues; sequence PGAPIIGPKPT. The segment covering 1335–1346 has biased composition (basic and acidic residues); that stretch reads PPEDIVRSNHYD. Y1353 carries the post-translational modification Phosphotyrosine. S1365 carries the phosphoserine modification. A compositionally biased stretch (polar residues) spans 1387-1401; it reads HSQNQTNFSSYSSKG. The segment covering 1402–1419 has biased composition (basic and acidic residues); it reads KSPEADAPDRSFGEKRYE. The residue at position 1412 (S1412) is a Phosphoserine. Polar residues-rich tracts occupy residues 1460-1471 and 1514-1523; these read NSISLDFQNSLV and AEQTQKTVTP. Positions 1539-1548 are enriched in basic and acidic residues; sequence PFERKFESPK. Phosphoserine is present on residues S1546 and S1618. A ZU5 domain is found at 1635 to 1769; sequence ATARGVFNNN…NCVSVLIDHF (135 aa).

The protein belongs to the MAGUK family. In terms of assembly, homodimer. Forms heterodimers TJP3. Forms a heterodimer (via PDZ2 domain) with TJP2/ZO2 (via PDZ2 domain). Interacts with OCLN. Interacts with CALM, claudins, CGN/cingulin, CXADR, GJA12, GJD3 and UBN1. Interacts (via ZU5 domain) with CDC42BPB and MYZAP. Interacts (via PDZ domain) with GJA1. Interacts (via PDZ domains) with ANKRD2. Interacts with POPDC1 (via the C-terminus cytoplasmic tail). Interacts with HSPA4. Interacts with KIRREL1. Interacts with DLL1. Interacts with USP53 (via the C-terminal region). Interacts with DNMBP (via C-terminal domain); required for the apical cell-cell junction localization of DNMBP. Interacts with SPEF1. Interacts (via N-terminus) with CTNNA1. Interacts with CLDN18. Interacts with CLDN16 (via TRV motif); this is a prerequisite for anchoring of CLDN16 at the tight junction. Interacts with PKP1; the interaction facilitates TJP1/ZO-1 localization to the plasma membrane. Interacts with PATJ (via PDZ1-6 domains); the interaction is required for attachment and extension of TJP1/ZO1 condensates along the apical cell interface. Phosphorylated at tyrosine redidues in response to epidermal growth factor (EGF). This response is dependent on an intact actin microfilament system. Dephosphorylated by PTPRJ.

It is found in the cell membrane. Its subcellular location is the cell junction. The protein resides in the tight junction. It localises to the gap junction. In terms of biological role, TJP1, TJP2, and TJP3 are closely related scaffolding proteins that link tight junction (TJ) transmembrane proteins such as claudins, junctional adhesion molecules, and occludin to the actin cytoskeleton. Forms a multistranded TJP1/ZO1 condensate which elongates to form a tight junction belt, the belt is anchored at the apical cell membrane via interaction with PATJ. The tight junction acts to limit movement of substances through the paracellular space and as a boundary between the compositionally distinct apical and basolateral plasma membrane domains of epithelial and endothelial cells. Necessary for lumenogenesis, and particularly efficient epithelial polarization and barrier formation. Plays a role in the regulation of cell migration by targeting CDC42BPBb to the leading edge of migrating cells. With TJP2 and TJP3, participates in the junctional retention and stability of the transcription factor DBPA, but is not involved in its shuttling to the nucleus. May play a role in mediating cell morphology changes during ameloblast differentiation via its role in tight junctions. The sequence is that of Tight junction protein 1 from Canis lupus familiaris (Dog).